The sequence spans 568 residues: Glucose-6-phosphate isomerase, cytosolic (568 aa).

The active-site Proton donor is glutamate 360. Active-site residues include histidine 391 and lysine 516.

It belongs to the GPI family. As to quaternary structure, homodimer.

It is found in the cytoplasm. It carries out the reaction alpha-D-glucose 6-phosphate = beta-D-fructose 6-phosphate. The protein operates within carbohydrate degradation; glycolysis; D-glyceraldehyde 3-phosphate and glycerone phosphate from D-glucose: step 2/4. The chain is Glucose-6-phosphate isomerase, cytosolic (PGIC) from Oenothera sinuata var. hirsuta (Mexican evening primrose).